The following is a 163-amino-acid chain: Nucleotide-binding protein MUL_0671 (163 aa).

It belongs to the YajQ family.

Its function is as follows. Nucleotide-binding protein. In Mycobacterium ulcerans (strain Agy99), this protein is Nucleotide-binding protein MUL_0671.